The primary structure comprises 706 residues: Catalase HPII (706 aa).

Catalysis depends on residues His77 and Asn151. Tyr365 serves as a coordination point for heme. The tract at residues Glu512–Thr532 is disordered.

Belongs to the catalase family. HPII subfamily. The cofactor is heme.

The protein localises to the cytoplasm. It catalyses the reaction 2 H2O2 = O2 + 2 H2O. Decomposes hydrogen peroxide into water and oxygen; serves to protect cells from the toxic effects of hydrogen peroxide. This is Catalase HPII (katE) from Mycobacterium avium.